The sequence spans 354 residues: Ferrochelatase (354 aa).

Fe cation-binding residues include His204 and Glu306.

It belongs to the ferrochelatase family.

The protein localises to the cytoplasm. The enzyme catalyses heme b + 2 H(+) = protoporphyrin IX + Fe(2+). The protein operates within porphyrin-containing compound metabolism; protoheme biosynthesis; protoheme from protoporphyrin-IX: step 1/1. Catalyzes the ferrous insertion into protoporphyrin IX. This Coxiella burnetii (strain RSA 493 / Nine Mile phase I) protein is Ferrochelatase.